The sequence spans 38 residues: STKLVIDPVTRIEGHGKVTVHLDDNNNVVDAHLHVVEF.

It belongs to the [NiFe]/[NiFeSe] hydrogenase large subunit family. Tetramer of an alpha and a gamma subunits (flavin-containing dimer), and a delta and a nickel-containing beta subunits (hydrogenase dimer). FMN is required as a cofactor. Requires Ni(2+) as cofactor.

It localises to the cytoplasm. The enzyme catalyses H2 + NAD(+) = NADH + H(+). The chain is NAD-reducing hydrogenase HoxS subunit beta (hoxH) from Rhodococcus opacus (Nocardia opaca).